Reading from the N-terminus, the 1045-residue chain is Extracellular serine protease (1045 aa).

A signal peptide spans 1 to 27; that stretch reads MILNKRLKLAYCVFLGCYGLSIHSSLA. The Peptidase S8 domain occupies 49-397; that stretch reads QWGLEAISAE…WGRVNLRDAI (349 aa). Residues aspartate 76, histidine 112, and serine 341 each act as charge relay system in the active site. Residues 646–1045 constitute a propeptide, translocator domain; removed in mature form; sequence SLASTENEKA…SVNAGLTWRF (400 aa). Residues 769 to 1045 form the Autotransporter domain; the sequence is IKADDNGAWA…SVNAGLTWRF (277 aa).

This sequence belongs to the peptidase S8 family.

The protein localises to the secreted. The polypeptide is Extracellular serine protease (Serratia marcescens).